We begin with the raw amino-acid sequence, 208 residues long: Holliday junction resolvase RecU (208 aa).

Residues 1 to 28 are disordered; sequence MNYPNGKPYSKNKPLDGRKSSPFSSNIE. The Mg(2+) site is built by threonine 87, aspartate 89, glutamate 102, and glutamine 121.

The protein belongs to the RecU family. It depends on Mg(2+) as a cofactor.

It localises to the cytoplasm. It carries out the reaction Endonucleolytic cleavage at a junction such as a reciprocal single-stranded crossover between two homologous DNA duplexes (Holliday junction).. Its function is as follows. Endonuclease that resolves Holliday junction intermediates in genetic recombination. Cleaves mobile four-strand junctions by introducing symmetrical nicks in paired strands. Promotes annealing of linear ssDNA with homologous dsDNA. Required for DNA repair, homologous recombination and chromosome segregation. This Staphylococcus epidermidis (strain ATCC 12228 / FDA PCI 1200) protein is Holliday junction resolvase RecU.